The chain runs to 468 residues: Sorting and assembly machinery component 50 homolog B (468 aa).

Positions 1–25 (MGTVHARSLDPLPMNGPDFGSPDDA) are disordered. The POTRA domain maps to 44–124 (VVVQRVHFEG…LDVTFEVTEL (81 aa)).

Belongs to the SAM50/omp85 family. In terms of assembly, associates with the mitochondrial contact site and cristae organizing system (MICOS) complex (also known as MINOS or MitOS complex).

It localises to the mitochondrion outer membrane. In terms of biological role, may play a role in the maintenance of the structure of mitochondrial cristae. The protein is Sorting and assembly machinery component 50 homolog B (samm50-b) of Xenopus laevis (African clawed frog).